The primary structure comprises 1383 residues: DNA-directed RNA polymerase subunit beta (1383 aa).

Belongs to the RNA polymerase beta chain family. In terms of assembly, the RNAP catalytic core consists of 2 alpha, 1 beta, 1 beta' and 1 omega subunit. When a sigma factor is associated with the core the holoenzyme is formed, which can initiate transcription.

It catalyses the reaction RNA(n) + a ribonucleoside 5'-triphosphate = RNA(n+1) + diphosphate. In terms of biological role, DNA-dependent RNA polymerase catalyzes the transcription of DNA into RNA using the four ribonucleoside triphosphates as substrates. This is DNA-directed RNA polymerase subunit beta from Bartonella quintana (strain Toulouse) (Rochalimaea quintana).